The chain runs to 112 residues: UPF0342 protein STER_0693 (112 aa).

The protein belongs to the UPF0342 family.

The polypeptide is UPF0342 protein STER_0693 (Streptococcus thermophilus (strain ATCC BAA-491 / LMD-9)).